Reading from the N-terminus, the 335-residue chain is Basic endochitinase B (335 aa).

The signal sequence occupies residues 1–33 (MPPQKENHRTLNKMKTNLFLFLIFSLLLSLSSA). Residues 34 to 75 (EQCGRQAGGALCPNGLCCSEFGWCGNTEPYCKQPGCQSQCTP) form the Chitin-binding type-1 domain. Cystine bridges form between Cys36-Cys51, Cys45-Cys57, Cys50-Cys64, Cys69-Cys73, Cys107-Cys169, Cys181-Cys189, and Cys288-Cys320. Glu151 functions as the Proton donor in the catalytic mechanism. A propeptide spans 329-335 (GLLEAAI) (removed in mature form). The Vacuolar targeting signal motif lies at 329–335 (GLLEAAI).

It belongs to the glycosyl hydrolase 19 family. Chitinase class I subfamily. In terms of tissue distribution, high constitutive level in roots with lower levels in leaves and flowering shoots.

Its subcellular location is the vacuole. It catalyses the reaction Random endo-hydrolysis of N-acetyl-beta-D-glucosaminide (1-&gt;4)-beta-linkages in chitin and chitodextrins.. In terms of biological role, defense against chitin-containing fungal pathogens. Seems particularly implicated in resistance to jasmonate-inducing pathogens such as A.brassicicola. In vitro antifungal activity against T.reesei, but not against A.solani, F.oxysporum, S.sclerotiorum, G.graminis and P.megasperma. In Arabidopsis thaliana (Mouse-ear cress), this protein is Basic endochitinase B (CHI-B).